The following is a 196-amino-acid chain: 3-isopropylmalate dehydratase small subunit (196 aa).

Belongs to the LeuD family. LeuD type 1 subfamily. Heterodimer of LeuC and LeuD.

The enzyme catalyses (2R,3S)-3-isopropylmalate = (2S)-2-isopropylmalate. The protein operates within amino-acid biosynthesis; L-leucine biosynthesis; L-leucine from 3-methyl-2-oxobutanoate: step 2/4. Catalyzes the isomerization between 2-isopropylmalate and 3-isopropylmalate, via the formation of 2-isopropylmaleate. This is 3-isopropylmalate dehydratase small subunit from Rhodopirellula baltica (strain DSM 10527 / NCIMB 13988 / SH1).